The sequence spans 230 residues: MGQKVNPKGIRLGIIKDWDSKWYASSKDYSKYLLSDIKVRNYLFKKLINASVSRVQIGRLVNNAKVTIYTARPGIVIGKKGADIEQLKLIVSKMMGIPVHINIEEIKKPELDARLVAENIAQQLEKRVMYRRAVKRVLGNATRLGAQGIKVMVSGRLNGAEIARSEWYREGRVPLHTFRADVDYSSYGAKTQYGVIGIKVWIFKGEILDHKKGTLDEVAHRGAINQIAKK.

The 69-residue stretch at 39 to 107 (VRNYLFKKLI…PVHINIEEIK (69 aa)) folds into the KH type-2 domain.

It belongs to the universal ribosomal protein uS3 family. As to quaternary structure, part of the 30S ribosomal subunit. Forms a tight complex with proteins S10 and S14.

Binds the lower part of the 30S subunit head. Binds mRNA in the 70S ribosome, positioning it for translation. The protein is Small ribosomal subunit protein uS3 of Vesicomyosocius okutanii subsp. Calyptogena okutanii (strain HA).